A 96-amino-acid polypeptide reads, in one-letter code: Protein RnfH (96 aa).

This sequence belongs to the UPF0125 (RnfH) family.

This is Protein RnfH from Escherichia coli O81 (strain ED1a).